The primary structure comprises 385 residues: Trehalose-phosphate phosphatase A (385 aa).

Residues 1 to 21 (MDMKSGHSSPVMTDSPPISNS) form a disordered region.

This sequence belongs to the trehalose phosphatase family. A divalent metal cation is required as a cofactor. In terms of tissue distribution, expressed in flowers.

It catalyses the reaction alpha,alpha-trehalose 6-phosphate + H2O = alpha,alpha-trehalose + phosphate. Its pathway is glycan biosynthesis; trehalose biosynthesis. Functionally, removes the phosphate from trehalose 6-phosphate to produce free trehalose. Trehalose accumulation in plant may improve abiotic stress tolerance. The protein is Trehalose-phosphate phosphatase A (TPPA) of Arabidopsis thaliana (Mouse-ear cress).